Consider the following 54-residue polypeptide: Large ribosomal subunit protein eL37 (54 aa).

Residues cysteine 20, cysteine 23, cysteine 35, and cysteine 38 each contribute to the Zn(2+) site. The C4-type zinc-finger motif lies at cysteine 20 to cysteine 38.

The protein belongs to the eukaryotic ribosomal protein eL37 family. The cofactor is Zn(2+).

In terms of biological role, binds to the 23S rRNA. The sequence is that of Large ribosomal subunit protein eL37 (rpl37e) from Thermoplasma volcanium (strain ATCC 51530 / DSM 4299 / JCM 9571 / NBRC 15438 / GSS1).